The following is a 101-amino-acid chain: Small ribosomal subunit protein uS14 (101 aa).

The protein belongs to the universal ribosomal protein uS14 family. As to quaternary structure, part of the 30S ribosomal subunit. Contacts proteins S3 and S10.

Its function is as follows. Binds 16S rRNA, required for the assembly of 30S particles and may also be responsible for determining the conformation of the 16S rRNA at the A site. This chain is Small ribosomal subunit protein uS14, found in Delftia acidovorans (strain DSM 14801 / SPH-1).